Reading from the N-terminus, the 842-residue chain is Glycogen phosphorylase, muscle form (842 aa).

Position 2 is an N-acetylserine (Ser2). Position 15 is a phosphoserine; by PHK; in form phosphorylase A (Ser15). Positions 43 and 76 each coordinate AMP. 2 positions are modified to phosphotyrosine: Tyr204 and Tyr227. 310–319 (RRFKSSKFGS) is a binding site for AMP. Residue Ser430 is modified to Phosphoserine. Residue Tyr473 is modified to Phosphotyrosine. Ser514 bears the Phosphoserine mark. Lys681 bears the N6-(pyridoxal phosphate)lysine mark. 2 positions are modified to phosphoserine: Ser747 and Ser748.

The protein belongs to the glycogen phosphorylase family. In terms of assembly, homodimer. Homotetramer; to form the enzymatically active phosphorylase A. Pyridoxal 5'-phosphate serves as cofactor. In terms of processing, phosphorylation of Ser-15 converts phosphorylase B (unphosphorylated) to phosphorylase A.

It carries out the reaction [(1-&gt;4)-alpha-D-glucosyl](n) + phosphate = [(1-&gt;4)-alpha-D-glucosyl](n-1) + alpha-D-glucose 1-phosphate. With respect to regulation, allosterically regulated through the non-covalent binding of metabolites, being activated by AMP and inhibited by ATP, ADP, and glucose-6-phosphate. The activity is also controlled by post-translational modifications including phosphorylation. In terms of biological role, allosteric enzyme that catalyzes the rate-limiting step in glycogen catabolism, the phosphorolytic cleavage of glycogen to produce glucose-1-phosphate, and plays a central role in maintaining cellular and organismal glucose homeostasis. The protein is Glycogen phosphorylase, muscle form of Mus musculus (Mouse).